Consider the following 440-residue polypeptide: uncharacterized protein (440 aa).

This is an uncharacterized protein from Rickettsia prowazekii (strain Madrid E).